Here is a 269-residue protein sequence, read N- to C-terminus: Tryptophan synthase alpha chain (269 aa).

Residues Glu-50 and Asp-61 each act as proton acceptor in the active site.

This sequence belongs to the TrpA family. As to quaternary structure, tetramer of two alpha and two beta chains.

The catalysed reaction is (1S,2R)-1-C-(indol-3-yl)glycerol 3-phosphate + L-serine = D-glyceraldehyde 3-phosphate + L-tryptophan + H2O. The protein operates within amino-acid biosynthesis; L-tryptophan biosynthesis; L-tryptophan from chorismate: step 5/5. In terms of biological role, the alpha subunit is responsible for the aldol cleavage of indoleglycerol phosphate to indole and glyceraldehyde 3-phosphate. The polypeptide is Tryptophan synthase alpha chain (Francisella tularensis subsp. tularensis (strain WY96-3418)).